A 556-amino-acid polypeptide reads, in one-letter code: Dihydroxy-acid dehydratase (556 aa).

Position 47 (Cys-47) interacts with [2Fe-2S] cluster. Asp-79 serves as a coordination point for Mg(2+). Cys-120 serves as a coordination point for [2Fe-2S] cluster. Asp-121 and Lys-122 together coordinate Mg(2+). An N6-carboxylysine modification is found at Lys-122. A [2Fe-2S] cluster-binding site is contributed by Cys-192. Glu-444 is a binding site for Mg(2+). Ser-470 functions as the Proton acceptor in the catalytic mechanism.

Belongs to the IlvD/Edd family. As to quaternary structure, homodimer. The cofactor is [2Fe-2S] cluster. Mg(2+) is required as a cofactor.

It catalyses the reaction (2R)-2,3-dihydroxy-3-methylbutanoate = 3-methyl-2-oxobutanoate + H2O. The enzyme catalyses (2R,3R)-2,3-dihydroxy-3-methylpentanoate = (S)-3-methyl-2-oxopentanoate + H2O. It functions in the pathway amino-acid biosynthesis; L-isoleucine biosynthesis; L-isoleucine from 2-oxobutanoate: step 3/4. The protein operates within amino-acid biosynthesis; L-valine biosynthesis; L-valine from pyruvate: step 3/4. Its function is as follows. Functions in the biosynthesis of branched-chain amino acids. Catalyzes the dehydration of (2R,3R)-2,3-dihydroxy-3-methylpentanoate (2,3-dihydroxy-3-methylvalerate) into 2-oxo-3-methylpentanoate (2-oxo-3-methylvalerate) and of (2R)-2,3-dihydroxy-3-methylbutanoate (2,3-dihydroxyisovalerate) into 2-oxo-3-methylbutanoate (2-oxoisovalerate), the penultimate precursor to L-isoleucine and L-valine, respectively. The polypeptide is Dihydroxy-acid dehydratase (Prochlorococcus marinus (strain MIT 9313)).